Consider the following 85-residue polypeptide: Cell division protein ZapA (85 aa).

Residues 60–85 are a coiled coil; that stretch reads AVNVVHDYLKLKEELERLKGQIKEKD.

This sequence belongs to the ZapA family. Type 2 subfamily. As to quaternary structure, homodimer. Interacts with FtsZ.

Its subcellular location is the cytoplasm. In terms of biological role, activator of cell division through the inhibition of FtsZ GTPase activity, therefore promoting FtsZ assembly into bundles of protofilaments necessary for the formation of the division Z ring. It is recruited early at mid-cell but it is not essential for cell division. This chain is Cell division protein ZapA, found in Bacillus licheniformis (strain ATCC 14580 / DSM 13 / JCM 2505 / CCUG 7422 / NBRC 12200 / NCIMB 9375 / NCTC 10341 / NRRL NRS-1264 / Gibson 46).